We begin with the raw amino-acid sequence, 143 residues long: Transcriptional regulator MraZ (143 aa).

SpoVT-AbrB domains lie at 5 to 47 (EYEH…PRGV) and 76 to 119 (AADM…SPRR).

The protein belongs to the MraZ family. Forms oligomers.

It localises to the cytoplasm. The protein localises to the nucleoid. The chain is Transcriptional regulator MraZ from Roseiflexus castenholzii (strain DSM 13941 / HLO8).